A 438-amino-acid polypeptide reads, in one-letter code: Putative F-box/FBD/LRR-repeat protein At5g44950 (438 aa).

Residues 3-49 (RDRISELPDGLLNHILMYLHIEESIRTSVLSSRWRKLWLKVPGLDVN) enclose the F-box domain. 2 LRR repeats span residues 246-275 (LSSLVKIDLDTEFNLKFGLGSPLEPEDLTK) and 286-310 (ISSVKHMIISHPTLEVLYRYSKIGQ). Positions 355–407 (PEQIDFTNLPRCLISTLEYVEIKQLTMREESGIKLVKYFLENSAVLKKLTLSF) constitute an FBD domain.

This chain is Putative F-box/FBD/LRR-repeat protein At5g44950, found in Arabidopsis thaliana (Mouse-ear cress).